We begin with the raw amino-acid sequence, 209 residues long: Potassium-transporting ATPase KdpC subunit (209 aa).

A helical transmembrane segment spans residues 18–38 (MLAVFTLFGLGLAYSLVATGI).

It belongs to the KdpC family. The system is composed of three essential subunits: KdpA, KdpB and KdpC.

The protein resides in the cell inner membrane. Functionally, part of the high-affinity ATP-driven potassium transport (or Kdp) system, which catalyzes the hydrolysis of ATP coupled with the electrogenic transport of potassium into the cytoplasm. This subunit acts as a catalytic chaperone that increases the ATP-binding affinity of the ATP-hydrolyzing subunit KdpB by the formation of a transient KdpB/KdpC/ATP ternary complex. The sequence is that of Potassium-transporting ATPase KdpC subunit from Xanthomonas oryzae pv. oryzae (strain MAFF 311018).